The sequence spans 752 residues: Primary amine oxidase (752 aa).

An N-terminal signal peptide occupies residues 1 to 27 (MAILSPRKTALALAVALSCAWQSPAFA). Substrate is bound by residues 408 to 419 (YLDSGDYGMGTL) and 490 to 495 (VGNYDY). The Proton acceptor role is filled by Asp-410. Tyr-493 acts as the Schiff-base intermediate with substrate; via topaquinone in catalysis. Residue Tyr-493 is modified to 2',4',5'-topaquinone. Cu cation contacts are provided by His-551 and His-553. Positions 560, 561, 562, 600, 694, 697, 699, and 705 each coordinate Ca(2+). Position 560 (Asp-560) interacts with Mn(2+). Residue Asp-562 participates in Mn(2+) binding. Position 705 (Asp-705) interacts with Mn(2+). His-716 lines the Cu cation pocket.

This sequence belongs to the copper/topaquinone oxidase family. Homodimer. It depends on Cu cation as a cofactor. Ca(2+) is required as a cofactor. L-topaquinone serves as cofactor. The cofactor is Mn(2+). Post-translationally, topaquinone (TPQ) is generated by copper-dependent autoxidation of a specific tyrosyl residue.

The protein resides in the periplasm. It carries out the reaction a primary methyl amine + O2 + H2O = an aldehyde + H2O2 + NH4(+). Functionally, active on tyramine, tryptamine, beta-phenethylamine and dopamine. The polypeptide is Primary amine oxidase (maoA) (Klebsiella michiganensis (strain ATCC 8724 / DSM 4798 / JCM 20051 / NBRC 3318 / NRRL B-199 / KCTC 1686 / BUCSAV 143 / CCM 1901)).